The chain runs to 419 residues: Chalcone synthase D (419 aa).

Cys164 is a catalytic residue.

The protein belongs to the thiolase-like superfamily. Chalcone/stilbene synthases family.

It catalyses the reaction (E)-4-coumaroyl-CoA + 3 malonyl-CoA + 3 H(+) = 2',4,4',6'-tetrahydroxychalcone + 3 CO2 + 4 CoA. It participates in secondary metabolite biosynthesis; flavonoid biosynthesis. In terms of biological role, the primary product of this enzyme is 4,2',4',6'-tetrahydroxychalcone (also termed naringenin-chalcone or chalcone) which can under specific conditions spontaneously isomerize into naringenin. The chain is Chalcone synthase D (CHSD) from Petunia hybrida (Petunia).